The chain runs to 1071 residues: ATP-dependent helicase/deoxyribonuclease subunit B (1071 aa).

It belongs to the helicase family. AddB/RexB type 2 subfamily. Heterodimer of AddA and RexB. It depends on Mg(2+) as a cofactor.

In terms of biological role, the heterodimer acts as both an ATP-dependent DNA helicase and an ATP-dependent, dual-direction single-stranded exonuclease. Recognizes the chi site generating a DNA molecule suitable for the initiation of homologous recombination. This subunit has 5' -&gt; 3' nuclease activity but not helicase activity. The protein is ATP-dependent helicase/deoxyribonuclease subunit B of Streptococcus pyogenes serotype M49 (strain NZ131).